The sequence spans 388 residues: Oligogalacturonate lyase (388 aa).

The protein localises to the periplasm. It catalyses the reaction 4-(4-deoxy-alpha-D-galact-4-enuronosyl)-D-galacturonate = 2 5-dehydro-4-deoxy-D-glucuronate. Its pathway is glycan metabolism; pectin degradation; 2-dehydro-3-deoxy-D-gluconate from pectin: step 3/5. Involved in degradation of pectin, which causes soft-rod disease in plants. This Dickeya dadantii (strain 3937) (Erwinia chrysanthemi (strain 3937)) protein is Oligogalacturonate lyase (ogl).